Consider the following 659-residue polypeptide: Exoribonuclease 2 (659 aa).

Residues 189–532 form the RNB domain; that stretch reads RRDLTALHFV…NHRLIKACLA (344 aa). The S1 motif domain maps to 577 to 659; that stretch reads NPEFRAEVQD…ETRSLIGNLV (83 aa).

Belongs to the RNR ribonuclease family. RNase II subfamily.

It localises to the cytoplasm. The catalysed reaction is Exonucleolytic cleavage in the 3'- to 5'-direction to yield nucleoside 5'-phosphates.. Functionally, involved in mRNA degradation. Hydrolyzes single-stranded polyribonucleotides processively in the 3' to 5' direction. In Mannheimia succiniciproducens (strain KCTC 0769BP / MBEL55E), this protein is Exoribonuclease 2.